We begin with the raw amino-acid sequence, 115 residues long: Holo-[acyl-carrier-protein] synthase (115 aa).

Residues D6 and E51 each contribute to the Mg(2+) site.

This sequence belongs to the P-Pant transferase superfamily. AcpS family. The cofactor is Mg(2+).

The protein resides in the cytoplasm. The enzyme catalyses apo-[ACP] + CoA = holo-[ACP] + adenosine 3',5'-bisphosphate + H(+). In terms of biological role, transfers the 4'-phosphopantetheine moiety from coenzyme A to a Ser of acyl-carrier-protein. The sequence is that of Holo-[acyl-carrier-protein] synthase from Campylobacter jejuni subsp. doylei (strain ATCC BAA-1458 / RM4099 / 269.97).